The chain runs to 456 residues: Exodeoxyribonuclease 7 large subunit (456 aa).

A binds ssDNA, also required to bind the small subunit region spans residues 1–103 (MLPSQSPAIF…DYQIIVESMQ (103 aa)).

It belongs to the XseA family. In terms of assembly, heterooligomer composed of two different subunits with an approximate ratio of 4:1 for small to large subunit. Also estimated to have a 6:1 ration for small to large subunits. Does not require a metal cofactor. serves as cofactor.

The protein localises to the cytoplasm. It carries out the reaction Exonucleolytic cleavage in either 5'- to 3'- or 3'- to 5'-direction to yield nucleoside 5'-phosphates.. Its function is as follows. Bidirectionally degrades single-stranded DNA into large acid-insoluble oligonucleotides, which are then degraded further into small acid-soluble oligonucleotides. It can degrade 3' or 5' ss regions extending from the termini of duplex DNA molecules and displaced ss regions. It can also excise thymine dimers in vitro. ssDNA-binding requires both subunits. Required for production of the mature 5'-end of retron Ec78 or Ec83 msDNA. Overproduction of this subunit in the absence of an equivalent quantity of the small subunit is toxic, causing cell elongation and chromosome fragmentation or loss; its toxicity is mostly suppressed by RecA. This chain is Exodeoxyribonuclease 7 large subunit, found in Escherichia coli (strain K12).